Here is a 189-residue protein sequence, read N- to C-terminus: RxLR effector protein CRE18 (189 aa).

The N-terminal stretch at 1-23 (MSKLFYAFAVLAVHVLTSSPTTA) is a signal peptide. The short motif at 47–68 (RFLRSIHEGEDSLKPSAFSEER) is the RxLR-dEER element.

Belongs to the RxLR effector family.

It localises to the secreted. The protein localises to the host cytoplasm. Its subcellular location is the host nucleus. Functionally, effector that is involved in host plant infection. Contributes to virulence during the early infection stage, by inhibiting plant defense responses induced by both PAMP-triggered immunity (PTI) and effector-triggered immunity (ETI). The polypeptide is RxLR effector protein CRE18 (Phytophthora infestans (strain T30-4) (Potato late blight agent)).